The chain runs to 215 residues: MSRFTYAYMMMTRLETLKNNLQAAFGQDLALTESLGELTLEVAAEQWFSACTKLRTDPALRFESCIDLCGVDYLTWGNGTQPEEKTGPVTHGRYAVVVHLLSIEHNWRLRVRTWAPDDEFPMVSSLLECWPGVNWFEREAFDLYGIVFEGHPDLRRILTDYGFIGHPFRKDFPLSGTVEMRYDPEQKRVIYQPVTIDPREITPRVVREGSYGMGR.

The protein belongs to the complex I 30 kDa subunit family. NDH-1 is composed of 14 different subunits. Subunits NuoB, C, D, E, F, and G constitute the peripheral sector of the complex.

It is found in the cell inner membrane. It carries out the reaction a quinone + NADH + 5 H(+)(in) = a quinol + NAD(+) + 4 H(+)(out). NDH-1 shuttles electrons from NADH, via FMN and iron-sulfur (Fe-S) centers, to quinones in the respiratory chain. The immediate electron acceptor for the enzyme in this species is believed to be ubiquinone. Couples the redox reaction to proton translocation (for every two electrons transferred, four hydrogen ions are translocated across the cytoplasmic membrane), and thus conserves the redox energy in a proton gradient. This Bordetella parapertussis (strain 12822 / ATCC BAA-587 / NCTC 13253) protein is NADH-quinone oxidoreductase subunit C.